The following is a 350-amino-acid chain: Alcohol dehydrogenase 1 (350 aa).

Cys-46, His-69, Cys-100, Cys-103, Cys-106, Cys-114, and Cys-156 together coordinate Zn(2+). Residues 180–186, Asp-204, Lys-209, 271–273, and Arg-343 each bind NAD(+); these read GAGGGLG and VGL.

Belongs to the zinc-containing alcohol dehydrogenase family. As to quaternary structure, homotetramer. The cofactor is Zn(2+).

Its subcellular location is the cytoplasm. The catalysed reaction is a primary alcohol + NAD(+) = an aldehyde + NADH + H(+). It catalyses the reaction a secondary alcohol + NAD(+) = a ketone + NADH + H(+). In Candida albicans (Yeast), this protein is Alcohol dehydrogenase 1 (ADH1).